The following is a 674-amino-acid chain: Probable copper-transporting P-type ATPase B (674 aa).

Residues 1-20 (MNHSNHMHHDNHESHHHYSG) form a disordered region. 6 helical membrane-spanning segments follow: residues 32-52 (FFVS…MGVN), 57-77 (FTFP…FFYG), 95-115 (GMMT…LYAF), 127-147 (TMDF…GHWI), 284-304 (GYLF…WMLI), and 315-335 (LVTV…PLVT). Aspartate 367 functions as the 4-aspartylphosphate intermediate in the catalytic mechanism. Aspartate 565 and aspartate 569 together coordinate Mg(2+). 2 helical membrane passes run 623-645 (LWWG…AFIG) and 649-671 (SPAV…AFTL).

The protein belongs to the cation transport ATPase (P-type) (TC 3.A.3) family. Type IB subfamily.

Its subcellular location is the cell membrane. It catalyses the reaction Cu(+)(in) + ATP + H2O = Cu(+)(out) + ADP + phosphate + H(+). Its function is as follows. Involved in copper transport. This is Probable copper-transporting P-type ATPase B (copB) from Staphylococcus haemolyticus (strain JCSC1435).